Here is a 187-residue protein sequence, read N- to C-terminus: Acireductone dioxygenase (187 aa).

4 residues coordinate Fe(2+): His90, His92, Glu96, and His135. Positions 90, 92, 96, and 135 each coordinate Ni(2+).

This sequence belongs to the acireductone dioxygenase (ARD) family. Fe(2+) is required as a cofactor. The cofactor is Ni(2+).

It is found in the cytoplasm. The protein resides in the nucleus. The catalysed reaction is 1,2-dihydroxy-5-(methylsulfanyl)pent-1-en-3-one + O2 = 4-methylsulfanyl-2-oxobutanoate + formate + 2 H(+). It carries out the reaction 1,2-dihydroxy-5-(methylsulfanyl)pent-1-en-3-one + O2 = 3-(methylsulfanyl)propanoate + CO + formate + 2 H(+). It functions in the pathway amino-acid biosynthesis; L-methionine biosynthesis via salvage pathway; L-methionine from S-methyl-5-thio-alpha-D-ribose 1-phosphate: step 5/6. Catalyzes 2 different reactions between oxygen and the acireductone 1,2-dihydroxy-3-keto-5-methylthiopentene (DHK-MTPene) depending upon the metal bound in the active site. Fe-containing acireductone dioxygenase (Fe-ARD) produces formate and 2-keto-4-methylthiobutyrate (KMTB), the alpha-ketoacid precursor of methionine in the methionine recycle pathway. Ni-containing acireductone dioxygenase (Ni-ARD) produces methylthiopropionate, carbon monoxide and formate, and does not lie on the methionine recycle pathway. This chain is Acireductone dioxygenase, found in Drosophila pseudoobscura pseudoobscura (Fruit fly).